A 1213-amino-acid chain; its full sequence is DNA-directed RNA polymerase subunit beta (1213 aa).

A disordered region spans residues 1153–1213 (RDMDEDSSEH…ADESDGKVSK (61 aa)). The segment covering 1171 to 1198 (MAEEQEKKKLAEETGKSENKEDSNETAD) has biased composition (basic and acidic residues).

This sequence belongs to the RNA polymerase beta chain family. As to quaternary structure, the RNAP catalytic core consists of 2 alpha, 1 beta, 1 beta' and 1 omega subunit. When a sigma factor is associated with the core the holoenzyme is formed, which can initiate transcription.

The enzyme catalyses RNA(n) + a ribonucleoside 5'-triphosphate = RNA(n+1) + diphosphate. Functionally, DNA-dependent RNA polymerase catalyzes the transcription of DNA into RNA using the four ribonucleoside triphosphates as substrates. This Lactobacillus acidophilus (strain ATCC 700396 / NCK56 / N2 / NCFM) protein is DNA-directed RNA polymerase subunit beta.